Here is a 282-residue protein sequence, read N- to C-terminus: DNA-3-methyladenine glycosylase 2 (282 aa).

Aspartate 238 serves as the catalytic Proton acceptor.

The protein belongs to the alkylbase DNA glycosidase AlkA family. In terms of assembly, monomer.

The enzyme catalyses Hydrolysis of alkylated DNA, releasing 3-methyladenine, 3-methylguanine, 7-methylguanine and 7-methyladenine.. Hydrolysis of the deoxyribose N-glycosidic bond to excise 3-methyladenine, 3-methylguanine, 7-methylguanine, O2-methylthymine, and O2-methylcytosine from the damaged DNA polymer formed by alkylation lesions. The polypeptide is DNA-3-methyladenine glycosylase 2 (alkA) (Escherichia coli (strain K12)).